We begin with the raw amino-acid sequence, 304 residues long: MSQDRLPQMVISIMLLANFDVSERCNIRPRSFDLIAKKGDNLVIIKVASHIDSVSADITWDLNLIARYLEATPLIVGERARDTDLERGVVYIRYGLFALNPETLYDYFVEGLSPMVYASPGGLYVRIKGDLLREVRERFRMSLGDLASHLGVSRRTISKYESGMGTTLDVAIKLEEIFNAPLVETIELLGYRTPEPEKHLESTPGDVLADLERMGMEIHAMRQAPFQALALFDRHTILTAYGTSQKIVKRASLIGNISQITKTFAMCVVTDYKKQKKIGKTLLIGEEHLHTLEDGSELIDMINE.

The HTH cro/C1-type domain maps to Leu-132 to Leu-189. The H-T-H motif DNA-binding region spans Leu-143–Ser-162.

This chain is Putative HTH-type transcriptional regulatory protein Memar_2347, found in Methanoculleus marisnigri (strain ATCC 35101 / DSM 1498 / JR1).